The chain runs to 739 residues: Phosphoribosylformylglycinamidine synthase subunit PurL (739 aa).

H54 is a catalytic residue. ATP-binding residues include Y57 and K96. E98 provides a ligand contact to Mg(2+). Residues 99–102 (SHNH) and R121 each bind substrate. H100 serves as the catalytic Proton acceptor. D122 is a Mg(2+) binding site. Q245 serves as a coordination point for substrate. D275 contacts Mg(2+). 319–321 (ESQ) lines the substrate pocket. The ATP site is built by D504 and G541. N542 is a binding site for Mg(2+). S544 contacts substrate.

It belongs to the FGAMS family. In terms of assembly, monomer. Part of the FGAM synthase complex composed of 1 PurL, 1 PurQ and 2 PurS subunits.

Its subcellular location is the cytoplasm. It catalyses the reaction N(2)-formyl-N(1)-(5-phospho-beta-D-ribosyl)glycinamide + L-glutamine + ATP + H2O = 2-formamido-N(1)-(5-O-phospho-beta-D-ribosyl)acetamidine + L-glutamate + ADP + phosphate + H(+). Its pathway is purine metabolism; IMP biosynthesis via de novo pathway; 5-amino-1-(5-phospho-D-ribosyl)imidazole from N(2)-formyl-N(1)-(5-phospho-D-ribosyl)glycinamide: step 1/2. Its function is as follows. Part of the phosphoribosylformylglycinamidine synthase complex involved in the purines biosynthetic pathway. Catalyzes the ATP-dependent conversion of formylglycinamide ribonucleotide (FGAR) and glutamine to yield formylglycinamidine ribonucleotide (FGAM) and glutamate. The FGAM synthase complex is composed of three subunits. PurQ produces an ammonia molecule by converting glutamine to glutamate. PurL transfers the ammonia molecule to FGAR to form FGAM in an ATP-dependent manner. PurS interacts with PurQ and PurL and is thought to assist in the transfer of the ammonia molecule from PurQ to PurL. In Lactococcus lactis subsp. cremoris (strain SK11), this protein is Phosphoribosylformylglycinamidine synthase subunit PurL.